A 237-amino-acid chain; its full sequence is tRNA (guanine-N(7)-)-methyltransferase (237 aa).

S-adenosyl-L-methionine contacts are provided by Glu56, Glu81, Asp108, and Asp131. Residue Asp131 is part of the active site. Residues Lys135, Asp167, and 204 to 207 (TKFE) each bind substrate.

The protein belongs to the class I-like SAM-binding methyltransferase superfamily. TrmB family.

It catalyses the reaction guanosine(46) in tRNA + S-adenosyl-L-methionine = N(7)-methylguanosine(46) in tRNA + S-adenosyl-L-homocysteine. The protein operates within tRNA modification; N(7)-methylguanine-tRNA biosynthesis. Functionally, catalyzes the formation of N(7)-methylguanine at position 46 (m7G46) in tRNA. This Legionella pneumophila (strain Paris) protein is tRNA (guanine-N(7)-)-methyltransferase.